A 264-amino-acid polypeptide reads, in one-letter code: Ribosomal RNA small subunit methyltransferase A (264 aa).

Residues N12, L14, G39, E60, D83, and N103 each contribute to the S-adenosyl-L-methionine site.

It belongs to the class I-like SAM-binding methyltransferase superfamily. rRNA adenine N(6)-methyltransferase family. RsmA subfamily.

It localises to the cytoplasm. It catalyses the reaction adenosine(1518)/adenosine(1519) in 16S rRNA + 4 S-adenosyl-L-methionine = N(6)-dimethyladenosine(1518)/N(6)-dimethyladenosine(1519) in 16S rRNA + 4 S-adenosyl-L-homocysteine + 4 H(+). Its function is as follows. Specifically dimethylates two adjacent adenosines (A1518 and A1519) in the loop of a conserved hairpin near the 3'-end of 16S rRNA in the 30S particle. May play a critical role in biogenesis of 30S subunits. In Syntrophotalea carbinolica (strain DSM 2380 / NBRC 103641 / GraBd1) (Pelobacter carbinolicus), this protein is Ribosomal RNA small subunit methyltransferase A.